The primary structure comprises 895 residues: Androgen receptor (895 aa).

The modulating stretch occupies residues 1–533; that stretch reads MEVQLGLGRV…PIDYYFPPQK (533 aa). Positions 1 to 562 are interaction with ZNF318; it reads MEVQLGLGRV…GSCKVFFKRA (562 aa). Disordered regions lie at residues 33 to 150 and 175 to 211; these read VIQN…LSLL and QLLQ…YLGG. Composition is skewed to low complexity over residues 44–81 and 175–200; these read AASA…GSPQ and QLLQ…ASGA. Phosphoserine; by CDK9 is present on Ser65. A Phosphoserine modification is found at Ser79. Positions 201–211 are enriched in polar residues; sequence PTSSKDNYLGG. Tyr208 carries the phosphotyrosine; by CSK modification. Residue Ser241 is modified to Phosphoserine. At Tyr252 the chain carries Phosphotyrosine; by CSK and TNK2. A phosphotyrosine; by CSK mark is found at Tyr292, Tyr331, Tyr342, and Tyr347. Residue Tyr348 is modified to Phosphotyrosine; by CSK and TNK2. Lys371 is covalently cross-linked (Glycyl lysine isopeptide (Lys-Gly) (interchain with G-Cter in SUMO)). At Tyr378 the chain carries Phosphotyrosine; by CSK. Residue Lys496 forms a Glycyl lysine isopeptide (Lys-Gly) (interchain with G-Cter in SUMO) linkage. Residues Tyr510 and Tyr527 each carry the phosphotyrosine; by CSK modification. The tract at residues 527-894 is interaction with LPXN; that stretch reads YYFPPQKTCL…GKVKPIYFHT (368 aa). The nuclear receptor DNA-binding region spans 534-607; it reads TCLICGDEAS…AGMTLGARKL (74 aa). NR C4-type zinc fingers lie at residues 535–555 and 571–595; these read CLIC…CGSC and CASR…LRKC. The interval 547–637 is interaction with HIPK3; it reads YGALTCGSCK…TEETAQKLTV (91 aa). The interval 567–894 is interaction with CCAR1; it reads QKYLCASRND…GKVKPIYFHT (328 aa). The interval 600–894 is interaction with KAT7; sequence MTLGARKLKK…GKVKPIYFHT (295 aa). Ser626 is modified (phosphoserine; by STK4/MST1). Positions 644 to 875 constitute an NR LBD domain; the sequence is ECQPIFLNVL…DFPEMMAEII (232 aa). 17beta-hydroxy-5alpha-androstan-3-one contacts are provided by Asn681 and Arg728. Residues Lys821 and Lys823 each participate in a glycyl lysine isopeptide (Lys-Gly) (interchain with G-Cter in ubiquitin) cross-link. Position 853 (Thr853) interacts with 17beta-hydroxy-5alpha-androstan-3-one. A Phosphotyrosine; by CSK modification is found at Tyr891.

It belongs to the nuclear hormone receptor family. NR3 subfamily. In terms of assembly, binds DNA as a homodimer. Part of a ternary complex containing AR, EFCAB6/DJBP and PARK7. Interacts with HIPK3 and NR0B2 in the presence of androgen. The ligand binding domain interacts with KAT7/HBO1 in the presence of dihydrotestosterone. Interacts with EFCAB6/DJBP, PQBP1, RANBP9, RBAK, SPDEF, SRA1, TGFB1I1 and RREB1. Interacts with ZMIZ1/ZIMP10 and ZMIZ2/ZMIP7 which both enhance its transactivation activity. Interacts with SLC30A9 and RAD54L2/ARIP4. Interacts with MACROD1 (via macro domain). Interacts via the ligand-binding domain with LXXLL and FXXLF motifs from NCOA1, NCOA2, NCOA3 and MAGEA11. Interacts (via nuclear receptor DNA binding domain and nuclear receptor ligand binding domain) with NCOA4. The AR N-terminal poly-Gln region binds Ran resulting in enhancement of AR-mediated transactivation. Ran-binding decreases as the poly-Gln length increases. Interacts with HIP1 (via coiled coil domain). Interacts (via ligand-binding domain) with TRIM68. Interacts with TNK2. Interacts with USP26. Interacts with RNF6. Interacts (regulated by RNF6 probably through polyubiquitination) with RNF14; regulates AR transcriptional activity. Interacts with PRMT2 and TRIM24. Interacts with RACK1. Interacts with RANBP10; this interaction enhances dihydrotestosterone-induced AR transcriptional activity. Interacts with PRPF6 in a hormone-independent way; this interaction enhances dihydrotestosterone-induced AR transcriptional activity. Interacts with STK4/MST1. Interacts with ZIPK/DAPK3. Interacts with LPXN. Interacts with MAK. Part of a complex containing AR, MAK and NCOA3. Interacts with CRY1. Interacts with CCAR1 and GATA2. Interacts with ZNF318. Interacts with BUD31. Interacts with ARID4A. Interacts with ARID4B. Interacts (via NR LBD domain) with ZBTB7A; the interaction is direct and androgen-dependent. Interacts with NCOR1. Interacts with NCOR2. Interacts with CRY2 in a ligand-dependent manner. Phosphorylated in prostate cancer cells in response to several growth factors including EGF. Phosphorylation is induced by c-Src kinase (CSK). Tyr-510 is one of the major phosphorylation sites and an increase in phosphorylation and Src kinase activity is associated with prostate cancer progression. Phosphorylation by TNK2 enhances the DNA-binding and transcriptional activity. Phosphorylation at Ser-65 by CDK9 regulates AR promoter selectivity and cell growth. In terms of processing, sumoylated on Lys-371 (major) and Lys-496. Ubiquitinated. Deubiquitinated by USP26. 'Lys-6' and 'Lys-27'-linked polyubiquitination by RNF6 modulates AR transcriptional activity and specificity. Post-translationally, palmitoylated by ZDHHC7 and ZDHHC21. Palmitoylation is required for plasma membrane targeting and for rapid intracellular signaling via ERK and AKT kinases and cAMP generation.

Its subcellular location is the nucleus. The protein localises to the cytoplasm. Its function is as follows. Steroid hormone receptors are ligand-activated transcription factors that regulate eukaryotic gene expression and affect cellular proliferation and differentiation in target tissues. Transcription factor activity is modulated by bound coactivator and corepressor proteins like ZBTB7A that recruits NCOR1 and NCOR2 to the androgen response elements/ARE on target genes, negatively regulating androgen receptor signaling and androgen-induced cell proliferation. Transcription activation is also down-regulated by NR0B2. Activated, but not phosphorylated, by HIPK3 and ZIPK/DAPK3. The chain is Androgen receptor (AR) from Macaca fascicularis (Crab-eating macaque).